Consider the following 264-residue polypeptide: Type III pantothenate kinase (264 aa).

Residue 6–13 (DVRNTSIE) participates in ATP binding. 109-112 (GADR) is a binding site for substrate. Asp111 (proton acceptor) is an active-site residue. Residue Asp131 coordinates K(+). Thr134 contributes to the ATP binding site. Residue Thr185 participates in substrate binding.

Belongs to the type III pantothenate kinase family. Homodimer. It depends on NH4(+) as a cofactor. The cofactor is K(+).

The protein localises to the cytoplasm. It carries out the reaction (R)-pantothenate + ATP = (R)-4'-phosphopantothenate + ADP + H(+). The protein operates within cofactor biosynthesis; coenzyme A biosynthesis; CoA from (R)-pantothenate: step 1/5. Its function is as follows. Catalyzes the phosphorylation of pantothenate (Pan), the first step in CoA biosynthesis. The chain is Type III pantothenate kinase from Nocardia farcinica (strain IFM 10152).